We begin with the raw amino-acid sequence, 143 residues long: Nucleoside diphosphate kinase (143 aa).

6 residues coordinate ATP: K11, F59, R87, T93, R104, and N114. The active-site Pros-phosphohistidine intermediate is H117.

This sequence belongs to the NDK family. Homotetramer. It depends on Mg(2+) as a cofactor.

The protein localises to the cytoplasm. The catalysed reaction is a 2'-deoxyribonucleoside 5'-diphosphate + ATP = a 2'-deoxyribonucleoside 5'-triphosphate + ADP. The enzyme catalyses a ribonucleoside 5'-diphosphate + ATP = a ribonucleoside 5'-triphosphate + ADP. Functionally, major role in the synthesis of nucleoside triphosphates other than ATP. The ATP gamma phosphate is transferred to the NDP beta phosphate via a ping-pong mechanism, using a phosphorylated active-site intermediate. This chain is Nucleoside diphosphate kinase, found in Salmonella agona (strain SL483).